The chain runs to 215 residues: Cytochrome b6 (215 aa).

A helical transmembrane segment spans residues 32 to 52; that stretch reads IFYCLGGITFTCFIIQVATGF. Position 35 (cysteine 35) interacts with heme c. Residues histidine 86 and histidine 100 each contribute to the heme b site. 3 helical membrane-spanning segments follow: residues 90-110, 116-136, and 186-206; these read ASMM…TGGF, LTWV…VTGY, and LHTF…FLMI. Histidine 187 and histidine 202 together coordinate heme b.

This sequence belongs to the cytochrome b family. PetB subfamily. In terms of assembly, the 4 large subunits of the cytochrome b6-f complex are cytochrome b6, subunit IV (17 kDa polypeptide, PetD), cytochrome f and the Rieske protein, while the 4 small subunits are PetG, PetL, PetM and PetN. The complex functions as a dimer. It depends on heme b as a cofactor. The cofactor is heme c.

Its subcellular location is the plastid. The protein resides in the chloroplast thylakoid membrane. In terms of biological role, component of the cytochrome b6-f complex, which mediates electron transfer between photosystem II (PSII) and photosystem I (PSI), cyclic electron flow around PSI, and state transitions. The protein is Cytochrome b6 of Euglena gracilis.